Here is a 167-residue protein sequence, read N- to C-terminus: Endoribonuclease YbeY (167 aa).

The Zn(2+) site is built by His-132, His-136, and His-142.

It belongs to the endoribonuclease YbeY family. Zn(2+) is required as a cofactor.

The protein localises to the cytoplasm. Its function is as follows. Single strand-specific metallo-endoribonuclease involved in late-stage 70S ribosome quality control and in maturation of the 3' terminus of the 16S rRNA. This chain is Endoribonuclease YbeY, found in Clostridium tetani (strain Massachusetts / E88).